Consider the following 190-residue polypeptide: Ribosome hibernation promotion factor (190 aa).

Residues 101–190 (RDRGDQEVFV…KYGLIQTSEQ (90 aa)) are required for ribosome-binding.

The protein belongs to the HPF/YfiA ribosome-associated protein family. Long HPF subfamily. As to quaternary structure, interacts with 100S ribosomes during exponential growth, as 100S ribosomes decrease (after 28 hours) also found associated with 30s and 50S subunits.

Its subcellular location is the cytoplasm. Its function is as follows. Required and sufficient for dimerization of active 70S ribosomes into 100S ribosomes. 110S ribosomes are probably translationally inactive and may serve as a reservoir of easily reactivated ribosomes when necessary in the cell. Also reduces the translation efficiency of a small number of genes. Unlike E.coli, 100S ribosomes are present during exponential growth and decrease during stationary phase. This strain produces 30% fewer 100S ribosomes than strain N315 and RN4200 under the same growth conditions. In Staphylococcus aureus (strain USA300), this protein is Ribosome hibernation promotion factor.